The chain runs to 154 residues: Large ribosomal subunit protein uL15 (154 aa).

Positions 1 to 44 (MKLNELGNCKGATRNRKRVGRGIGSGTGKTSGRGVKGQKSRSGV) are disordered. Positions 21-35 (RGIGSGTGKTSGRGV) are enriched in gly residues.

The protein belongs to the universal ribosomal protein uL15 family. Part of the 50S ribosomal subunit.

In terms of biological role, binds to the 23S rRNA. The sequence is that of Large ribosomal subunit protein uL15 from Bartonella quintana (strain Toulouse) (Rochalimaea quintana).